A 113-amino-acid chain; its full sequence is Hydrogenase maturation factor HypA (113 aa).

H2 lines the Ni(2+) pocket. Zn(2+)-binding residues include C73, C75, C89, and C92.

This sequence belongs to the HypA/HybF family.

In terms of biological role, involved in the maturation of [NiFe] hydrogenases. Required for nickel insertion into the metal center of the hydrogenase. The chain is Hydrogenase maturation factor HypA from Methanocella arvoryzae (strain DSM 22066 / NBRC 105507 / MRE50).